The sequence spans 440 residues: Protein disulfide-isomerase A6 homolog (440 aa).

Residues 1-18 form the signal peptide; the sequence is MALIKLLLASLAITSVCG. Thioredoxin domains follow at residues 19–131 and 127–273; these read MYSK…AEAK and LAEA…ARAQ. Active-site nucleophile residues include C54 and C57. Residues C54 and C57 are joined by a disulfide bond. The segment at 138-164 is disordered; the sequence is LGGKSSGSSSSGSGSGSGKRGGGGSGN. The segment covering 139-149 has biased composition (low complexity); that stretch reads GGKSSGSSSSG. Residues 150–163 are compositionally biased toward gly residues; the sequence is SGSGSGKRGGGGSG. Catalysis depends on nucleophile residues C194 and C197. A disulfide bond links C194 and C197. The disordered stretch occupies residues 404-426; the sequence is DGFPKIQKTEKWDGKDGALPAED. A compositionally biased stretch (basic and acidic residues) spans 410–419; it reads QKTEKWDGKD. Positions 437–440 match the Prevents secretion from ER motif; the sequence is KTEL.

The protein belongs to the protein disulfide isomerase family.

Its subcellular location is the endoplasmic reticulum lumen. It carries out the reaction Catalyzes the rearrangement of -S-S- bonds in proteins.. Its function is as follows. May function as a chaperone that inhibits aggregation of misfolded proteins. May negatively regulate the unfolded protein response (UPR) through binding to UPR sensors. The protein is Protein disulfide-isomerase A6 homolog of Caenorhabditis elegans.